We begin with the raw amino-acid sequence, 275 residues long: NH(3)-dependent NAD(+) synthetase (275 aa).

Residue Gly-46–Ser-53 participates in ATP binding. Asp-52 is a binding site for Mg(2+). Deamido-NAD(+) is bound at residue Arg-140. Thr-160 is a binding site for ATP. Glu-165 serves as a coordination point for Mg(2+). Residues Lys-173 and Asp-180 each contribute to the deamido-NAD(+) site. ATP is bound by residues Lys-189 and Thr-211. Position 260–261 (His-260–Lys-261) interacts with deamido-NAD(+).

The protein belongs to the NAD synthetase family. As to quaternary structure, homodimer.

It carries out the reaction deamido-NAD(+) + NH4(+) + ATP = AMP + diphosphate + NAD(+) + H(+). It functions in the pathway cofactor biosynthesis; NAD(+) biosynthesis; NAD(+) from deamido-NAD(+) (ammonia route): step 1/1. Its function is as follows. Catalyzes the ATP-dependent amidation of deamido-NAD to form NAD. Uses ammonia as a nitrogen source. This Salmonella dublin (strain CT_02021853) protein is NH(3)-dependent NAD(+) synthetase.